Reading from the N-terminus, the 257-residue chain is Probable enoyl-CoA hydratase (257 aa).

The protein belongs to the enoyl-CoA hydratase/isomerase family.

It carries out the reaction a (3S)-3-hydroxyacyl-CoA = a (2E)-enoyl-CoA + H2O. The catalysed reaction is a 4-saturated-(3S)-3-hydroxyacyl-CoA = a (3E)-enoyl-CoA + H2O. Functionally, could possibly oxidize fatty acids using specific components. This Rhizobium meliloti (strain 1021) (Ensifer meliloti) protein is Probable enoyl-CoA hydratase (fadB1).